Reading from the N-terminus, the 300-residue chain is UDP-N-acetylenolpyruvoylglucosamine reductase (300 aa).

In terms of domain architecture, FAD-binding PCMH-type spans 30-194; sequence RVGGPADFFV…IGATFVLDSD (165 aa). Residue arginine 174 is part of the active site. The active-site Proton donor is serine 223. Glutamate 293 is an active-site residue.

This sequence belongs to the MurB family. Requires FAD as cofactor.

It localises to the cytoplasm. The catalysed reaction is UDP-N-acetyl-alpha-D-muramate + NADP(+) = UDP-N-acetyl-3-O-(1-carboxyvinyl)-alpha-D-glucosamine + NADPH + H(+). It functions in the pathway cell wall biogenesis; peptidoglycan biosynthesis. Functionally, cell wall formation. This Geobacter sulfurreducens (strain ATCC 51573 / DSM 12127 / PCA) protein is UDP-N-acetylenolpyruvoylglucosamine reductase.